The sequence spans 141 residues: Hemoglobin subunit alpha (141 aa).

A Globin domain is found at 1–141 (VLSDNDKTNV…VSTVLTSKYR (141 aa)). Ser-3 bears the Phosphoserine mark. Lys-7 carries the N6-succinyllysine modification. Thr-8 carries the post-translational modification Phosphothreonine. At Lys-11 the chain carries N6-succinyllysine. Lys-16 carries the N6-acetyllysine; alternate modification. Lys-16 is subject to N6-succinyllysine; alternate. A Phosphotyrosine modification is found at Tyr-24. Ser-35 is subject to Phosphoserine. Lys-40 carries the N6-succinyllysine modification. His-58 is an O2 binding site. Position 87 (His-87) interacts with heme b. Residue Ser-102 is modified to Phosphoserine. Residue Thr-108 is modified to Phosphothreonine. Residue Ser-124 is modified to Phosphoserine. Phosphothreonine occurs at positions 134 and 137. Ser-138 carries the phosphoserine modification.

Belongs to the globin family. As to quaternary structure, heterotetramer of two alpha chains and two beta chains. As to expression, red blood cells.

Involved in oxygen transport from the lung to the various peripheral tissues. Functionally, hemopressin acts as an antagonist peptide of the cannabinoid receptor CNR1. Hemopressin-binding efficiently blocks cannabinoid receptor CNR1 and subsequent signaling. The polypeptide is Hemoglobin subunit alpha (HBA) (Loxodonta africana (African elephant)).